Consider the following 1059-residue polypeptide: MPVSMAVCETANVVNAALRESLGVGNGSRAADEAKKTGGGGGDDSDSEMHNQIAVSAYAKRILMSKIEYEEVPNYHDSVLEQLKNKYIVIKQPSNNNNSSSCNGSNFGNSKVVGANGHDNGNNGHRKLTQSESTQSGPSPNELPKPKRVLYPRENIRIGWKQSERKWQVGTGMINVGNTCYLNSTLQALFHIPALANWLVSEQTHLENCNITESNGGCIICAMAKTLQSTQSCQSAMRPFHIYSKLKQICKHMVVGRQEDAHEFLRFLVEAMEKAYLMRFRNFKELDQLVKETTPLNQIFGGYLRSEVRCLSCSHVSITFQHFQDLLLDIRKSDTLEEAFDGYFSRERLEDMGYKCEGCKKKVSATKQFSLERAPITLCIQLKRFSMIGNKLTKTISFKPRIDLSRFAARSPAAAAQPLTYRLVSMVTHLGVSQHCGHYTAIGMTESGSYYNFDDSYVRPIAMQSVCNTNAYIMFYELDLSQTTPLKSNGLRLTNGHSQVAVPATVSSSSPTHTRFIGPQLPPGGINGYSNGHATGSSNAQKTAIQFKQQQQHPQQNGLQVGTGKFQEPPHAKSPLAGAYNKGEAFPATTANGNKSSSSSASNSNHNKSVNQLQHQQHYLPISSEDEDSEDGATATATATATARPTAQLPSMPKMTEDSSDKPKTPLKSSVKTNLVKSLLKTPLKSLVPYESASEEDEPLPNPRKRRSDSDSNDSGDSDPQPGHVNGHTKTNGGSLTNGNGLGKAKTILATSSSSSLASASASAASDDEDADEEEENSKLTNGWQPQKQSQSLTQSKAPPSPKTPPSPAVIKSKTGIWKVTRNDDNEDEDDDDDEDEEEQHQVVSTPSKNPRNPFAKSSTTPGAKRQKLLNGIAVKSQQQPRVGNGYQSEASTNGNVVNELLKQTHRGYGSASVLSWSGKPAELEKELVAEAREQRQHDHDDEEENEMDRGRQRKVKSATAKAYNSSTPGYNPFQEYESQKRWHKSSNGGGSFPRYHNQNFRQNFQQRNKFKYNRFGGPGGAKFQQQRALQRHLASGGVFNRRQPTGQQQQQQSQQSSS.

Disordered stretches follow at residues 24–49 (VGNG…DSEM) and 94–148 (SNNN…KPKR). Over residues 94 to 123 (SNNNNSSSCNGSNFGNSKVVGANGHDNGNN) the composition is skewed to low complexity. Polar residues predominate over residues 130–139 (QSESTQSGPS). The region spanning 171–479 (TGMINVGNTC…NAYIMFYELD (309 aa)) is the USP domain. Cysteine 180 functions as the Nucleophile in the catalytic mechanism. Catalysis depends on histidine 438, which acts as the Proton acceptor. The interval 505 to 673 (TVSSSSPTHT…KTPLKSSVKT (169 aa)) is disordered. Phosphoserine is present on residues serine 508 and serine 510. Polar residues predominate over residues 528–539 (GYSNGHATGSSN). Low complexity-rich tracts occupy residues 540 to 560 (AQKT…NGLQ), 592 to 611 (NGNK…KSVN), and 633 to 647 (ATAT…RPTA). The span at 655-664 (MTEDSSDKPK) shows a compositional bias: basic and acidic residues. Residues threonine 673 and threonine 682 each carry the phosphothreonine modification. Disordered regions lie at residues 687-893 (LVPY…EAST), 926-998 (KELV…RYHN), and 1012-1059 (KYNR…QSSS). Serine 692 and serine 694 each carry phosphoserine. Composition is skewed to low complexity over residues 729–739 (TKTNGGSLTNG) and 752–765 (SSSS…ASAA). Serine 766 carries the post-translational modification Phosphoserine. Residues 766–776 (SDDEDADEEEE) are compositionally biased toward acidic residues. Residues 779–795 (KLTNGWQPQKQSQSLTQ) show a composition bias toward polar residues. Residues 799 to 808 (PPSPKTPPSP) are compositionally biased toward pro residues. Position 801 is a phosphoserine (serine 801). Residue threonine 804 is modified to Phosphothreonine. Serine 807 is modified (phosphoserine). Over residues 825–839 (DNEDEDDDDDEDEEE) the composition is skewed to acidic residues. Polar residues-rich tracts occupy residues 842 to 862 (QVVS…STTP) and 876 to 893 (KSQQ…EAST). 2 positions are modified to phosphothreonine: threonine 846 and threonine 861. The span at 926 to 940 (KELVAEAREQRQHDH) shows a compositional bias: basic and acidic residues. Positions 1048 to 1059 (QQQQQQSQQSSS) are enriched in low complexity.

Belongs to the peptidase C19 family. As to quaternary structure, interacts with atms/PAF1, but not with CycT.

The protein localises to the nucleus. The protein resides in the nucleolus. It catalyses the reaction Thiol-dependent hydrolysis of ester, thioester, amide, peptide and isopeptide bonds formed by the C-terminal Gly of ubiquitin (a 76-residue protein attached to proteins as an intracellular targeting signal).. In terms of biological role, required for maintaining multiple types of adult stem cells, including male and female germline, epithelial follicle cell and intestinal stem cells. May function as a transcriptional repressor by continually deubiquiting histone H2B at the promoters of genes critical for cellular differentiation, thereby preventing histone H3 'Lys-4' trimethylation (H3K4). Controls selective autophagy activation by ubiquitinated proteins. The protein is Ubiquitin carboxyl-terminal hydrolase 36 (Usp36) of Drosophila pseudoobscura pseudoobscura (Fruit fly).